A 205-amino-acid polypeptide reads, in one-letter code: Adenylyl-sulfate kinase (205 aa).

31-38 (GLSGAGKS) serves as a coordination point for ATP. Ser105 functions as the Phosphoserine intermediate in the catalytic mechanism.

This sequence belongs to the APS kinase family.

It catalyses the reaction adenosine 5'-phosphosulfate + ATP = 3'-phosphoadenylyl sulfate + ADP + H(+). The protein operates within sulfur metabolism; hydrogen sulfide biosynthesis; sulfite from sulfate: step 2/3. In terms of biological role, catalyzes the synthesis of activated sulfate. The protein is Adenylyl-sulfate kinase of Shewanella oneidensis (strain ATCC 700550 / JCM 31522 / CIP 106686 / LMG 19005 / NCIMB 14063 / MR-1).